The following is a 109-amino-acid chain: Large ribosomal subunit protein uL22 (109 aa).

Belongs to the universal ribosomal protein uL22 family. As to quaternary structure, part of the 50S ribosomal subunit.

Its function is as follows. This protein binds specifically to 23S rRNA; its binding is stimulated by other ribosomal proteins, e.g. L4, L17, and L20. It is important during the early stages of 50S assembly. It makes multiple contacts with different domains of the 23S rRNA in the assembled 50S subunit and ribosome. Functionally, the globular domain of the protein is located near the polypeptide exit tunnel on the outside of the subunit, while an extended beta-hairpin is found that lines the wall of the exit tunnel in the center of the 70S ribosome. This chain is Large ribosomal subunit protein uL22, found in Cupriavidus taiwanensis (strain DSM 17343 / BCRC 17206 / CCUG 44338 / CIP 107171 / LMG 19424 / R1) (Ralstonia taiwanensis (strain LMG 19424)).